We begin with the raw amino-acid sequence, 1395 residues long: DNA-directed RNA polymerase subunit beta' (1395 aa).

4 residues coordinate Zn(2+): Cys70, Cys72, Cys85, and Cys88. Residues Asp461, Asp463, and Asp465 each contribute to the Mg(2+) site. Positions 815, 889, 896, and 899 each coordinate Zn(2+).

Belongs to the RNA polymerase beta' chain family. The RNAP catalytic core consists of 2 alpha, 1 beta, 1 beta' and 1 omega subunit. When a sigma factor is associated with the core the holoenzyme is formed, which can initiate transcription. It depends on Mg(2+) as a cofactor. Zn(2+) serves as cofactor.

It catalyses the reaction RNA(n) + a ribonucleoside 5'-triphosphate = RNA(n+1) + diphosphate. Its function is as follows. DNA-dependent RNA polymerase catalyzes the transcription of DNA into RNA using the four ribonucleoside triphosphates as substrates. In Ruthia magnifica subsp. Calyptogena magnifica, this protein is DNA-directed RNA polymerase subunit beta'.